The sequence spans 123 residues: UPF0482 protein YE2026 (123 aa).

An N-terminal signal peptide occupies residues 1-31 (MKITSLPRLMRVFLPVAVLALPLAWQTAALA). Residues 47–66 (GNNDPMSKEQARQSQQQWDD) are disordered.

Belongs to the UPF0482 family.

The protein is UPF0482 protein YE2026 of Yersinia enterocolitica serotype O:8 / biotype 1B (strain NCTC 13174 / 8081).